We begin with the raw amino-acid sequence, 201 residues long: Putative ankyrin repeat protein R868 (201 aa).

ANK repeat units follow at residues 125-154 (YENNALNWASKYGFLEIVKLIMENKINCYF) and 156-188 (KAKKAYQLAITYGHTDVVDFLKTYVNTNSDYNF).

The polypeptide is Putative ankyrin repeat protein R868 (Acanthamoeba polyphaga (Amoeba)).